A 248-amino-acid chain; its full sequence is Triosephosphate isomerase (248 aa).

Residue 9-11 (NWK) coordinates substrate. Catalysis depends on His94, which acts as the Electrophile. Glu166 serves as the catalytic Proton acceptor. Residues Gly172, Ser212, and 233-234 (GG) each bind substrate.

It belongs to the triosephosphate isomerase family. In terms of assembly, homodimer.

Its subcellular location is the cytoplasm. It catalyses the reaction D-glyceraldehyde 3-phosphate = dihydroxyacetone phosphate. The protein operates within carbohydrate biosynthesis; gluconeogenesis. Its pathway is carbohydrate degradation; glycolysis; D-glyceraldehyde 3-phosphate from glycerone phosphate: step 1/1. Its function is as follows. Involved in the gluconeogenesis. Catalyzes stereospecifically the conversion of dihydroxyacetone phosphate (DHAP) to D-glyceraldehyde-3-phosphate (G3P). The polypeptide is Triosephosphate isomerase (Clostridium perfringens (strain ATCC 13124 / DSM 756 / JCM 1290 / NCIMB 6125 / NCTC 8237 / Type A)).